Here is a 259-residue protein sequence, read N- to C-terminus: Protein TILLER ANGLE CONTROL 1 (259 aa).

Positions 56 to 62 match the IGT motif motif; it reads GILAIGT. Disordered stretches follow at residues 96–123, 206–226, and 239–259; these read EEKA…AKMH, SCME…PLKA, and GKKI…PVTA. Positions 109–119 are enriched in low complexity; the sequence is APSEPASALEP.

The protein belongs to the TAC family. In terms of tissue distribution, expressed in the basal part of seedlings.

Functionally, involved in the regulation of tiller growth angle. Promotes horizontal shoot growth. TAC1 and LAZY1 play opposite functions in the regulation of tiller growth angle. The protein is Protein TILLER ANGLE CONTROL 1 of Oryza sativa subsp. indica (Rice).